A 628-amino-acid polypeptide reads, in one-letter code: tRNA uridine 5-carboxymethylaminomethyl modification enzyme MnmG (628 aa).

FAD-binding positions include 11–16, Val-123, and Ser-178; that span reads GAGHAG. 271-285 serves as a coordination point for NAD(+); it reads GPRYCPSIETKIVTF. Gln-368 is a binding site for FAD.

Belongs to the MnmG family. As to quaternary structure, homodimer. Heterotetramer of two MnmE and two MnmG subunits. It depends on FAD as a cofactor.

The protein localises to the cytoplasm. Functionally, NAD-binding protein involved in the addition of a carboxymethylaminomethyl (cmnm) group at the wobble position (U34) of certain tRNAs, forming tRNA-cmnm(5)s(2)U34. This chain is tRNA uridine 5-carboxymethylaminomethyl modification enzyme MnmG, found in Bacteroides thetaiotaomicron (strain ATCC 29148 / DSM 2079 / JCM 5827 / CCUG 10774 / NCTC 10582 / VPI-5482 / E50).